We begin with the raw amino-acid sequence, 393 residues long: Dual-specificity RNA methyltransferase RlmN (393 aa).

Glu-114 serves as the catalytic Proton acceptor. In terms of domain architecture, Radical SAM core spans 120–359 (EDDRATLCVS…VIVRKTRGDD (240 aa)). The cysteines at positions 127 and 364 are disulfide-linked. Positions 134, 138, and 141 each coordinate [4Fe-4S] cluster. Residues 188–189 (GE), Ser-220, 242–244 (SLH), and Asn-321 each bind S-adenosyl-L-methionine. Residue Cys-364 is the S-methylcysteine intermediate of the active site.

Belongs to the radical SAM superfamily. RlmN family. Requires [4Fe-4S] cluster as cofactor.

It localises to the cytoplasm. The enzyme catalyses adenosine(2503) in 23S rRNA + 2 reduced [2Fe-2S]-[ferredoxin] + 2 S-adenosyl-L-methionine = 2-methyladenosine(2503) in 23S rRNA + 5'-deoxyadenosine + L-methionine + 2 oxidized [2Fe-2S]-[ferredoxin] + S-adenosyl-L-homocysteine. It catalyses the reaction adenosine(37) in tRNA + 2 reduced [2Fe-2S]-[ferredoxin] + 2 S-adenosyl-L-methionine = 2-methyladenosine(37) in tRNA + 5'-deoxyadenosine + L-methionine + 2 oxidized [2Fe-2S]-[ferredoxin] + S-adenosyl-L-homocysteine. Functionally, specifically methylates position 2 of adenine 2503 in 23S rRNA and position 2 of adenine 37 in tRNAs. m2A2503 modification seems to play a crucial role in the proofreading step occurring at the peptidyl transferase center and thus would serve to optimize ribosomal fidelity. The polypeptide is Dual-specificity RNA methyltransferase RlmN (Actinobacillus pleuropneumoniae serotype 3 (strain JL03)).